The chain runs to 437 residues: Endoplasmic reticulum protein SC65 (437 aa).

The signal sequence occupies residues 1–18; the sequence is MARVAWGLLWLLLGSAGA. N-linked (GlcNAc...) asparagine glycosylation occurs at Asn-361. Composition is skewed to acidic residues over residues 381–413 and 428–437; these read DEME…EEGM and AEAEPEPELA. The interval 381–437 is disordered; the sequence is DEMELEETEPPLEPEDALSDAEFEGEGDYEEGMYADWWQEPDAKGDEAEAEPEPELA.

Belongs to the leprecan family. Interacts with PLOD1, P3H3 and PPIB. Identified in a complex with PLOD1 and P3H3. As to expression, detected in fibroblasts (at protein level). Detected in spleen, prostate, testis, ovary, colon, pancreas, kidney, placenta and heart.

Its subcellular location is the endoplasmic reticulum. In terms of biological role, part of a complex composed of PLOD1, P3H3 and P3H4 that catalyzes hydroxylation of lysine residues in collagen alpha chains and is required for normal assembly and cross-linking of collagen fibrils. Required for normal bone density and normal skin stability via its role in hydroxylation of lysine residues in collagen alpha chains and in collagen fibril assembly. This Homo sapiens (Human) protein is Endoplasmic reticulum protein SC65.